The chain runs to 160 residues: Lymphocyte antigen 86 (160 aa).

An N-terminal signal peptide occupies residues 1–20 (MKTLNVLALVLVLLCINAST). 3 disulfides stabilise this stretch: cysteine 28/cysteine 53, cysteine 40/cysteine 149, and cysteine 97/cysteine 107.

M-shaped tetramer of two CD180-LY86 heterodimers. Detected in the macrophage-like 10.4 cells.

The protein resides in the secreted. It is found in the extracellular space. In terms of biological role, may cooperate with CD180 and TLR4 to mediate the innate immune response to bacterial lipopolysaccharide (LPS) and cytokine production. Important for efficient CD180 cell surface expression. This is Lymphocyte antigen 86 (LY86) from Gallus gallus (Chicken).